Reading from the N-terminus, the 67-residue chain is Probable Sec-independent protein translocase protein TatE (67 aa).

The helical transmembrane segment at 4 to 21 (ISITKLLVIAALVVLLFG) threads the bilayer.

Belongs to the TatA/E family. TatE subfamily.

The protein localises to the cell inner membrane. Part of the twin-arginine translocation (Tat) system that transports large folded proteins containing a characteristic twin-arginine motif in their signal peptide across membranes. TatE shares overlapping functions with TatA. The protein is Probable Sec-independent protein translocase protein TatE of Citrobacter rodentium (strain ICC168) (Citrobacter freundii biotype 4280).